The chain runs to 205 residues: Protein-L-isoaspartate O-methyltransferase (205 aa).

Residue S56 is part of the active site.

The protein belongs to the methyltransferase superfamily. L-isoaspartyl/D-aspartyl protein methyltransferase family.

It is found in the cytoplasm. It catalyses the reaction [protein]-L-isoaspartate + S-adenosyl-L-methionine = [protein]-L-isoaspartate alpha-methyl ester + S-adenosyl-L-homocysteine. Catalyzes the methyl esterification of L-isoaspartyl residues in peptides and proteins that result from spontaneous decomposition of normal L-aspartyl and L-asparaginyl residues. It plays a role in the repair and/or degradation of damaged proteins. This Aeromonas hydrophila subsp. hydrophila (strain ATCC 7966 / DSM 30187 / BCRC 13018 / CCUG 14551 / JCM 1027 / KCTC 2358 / NCIMB 9240 / NCTC 8049) protein is Protein-L-isoaspartate O-methyltransferase.